The sequence spans 335 residues: MKRPRVFVTREVFPEALELLSKYYDVEVWDKYQPPPYETLLSKAREADALYTLLTDRIDCDLLSQAPRLRIVAQMAVGFDNIDVECATRLGIYVTNTPGVLTEATAEFTWALILAAARRVVEADHFVRWGEWWRLRTGWHPMMMLGVELRGKTLGILGMGRIGSRVAEIGKAFGMRIIYHSRSRKREIEKELGAEYRSLEDLLRESDILSIHLPLTDETRHLIGESELKLMKKTAILVNTGRGAIVDTGALVKALREGWIAAAALDVFEEEPLNPNHPLTAFKNVVLAPHAASATRETRLRMAMMAAENLVAFAQGKVPPNLVNREVVKVRQPGF.

NADP(+) is bound by residues 159–162 (MGRI), 181–183 (SRS), and 240–242 (TGR). Residues Arg242 and Glu271 contribute to the active site. His290 functions as the Proton donor in the catalytic mechanism. Residue 290 to 292 (HAA) participates in NADP(+) binding.

The protein belongs to the D-isomer specific 2-hydroxyacid dehydrogenase family. GyaR subfamily. In terms of assembly, homodimer.

It is found in the cytoplasm. The catalysed reaction is glycolate + NAD(+) = glyoxylate + NADH + H(+). The protein is Glyoxylate reductase of Aeropyrum pernix (strain ATCC 700893 / DSM 11879 / JCM 9820 / NBRC 100138 / K1).